We begin with the raw amino-acid sequence, 421 residues long: MGARVLVATTPGDGHVNPMVPVAQEMVSRGHEVRWYTGKAFRSTVERTGARHEPMRDAHDFGGMPREEAFPQHAGLTGITGMIAGFRDIFIEPAADQMTDLLALLEDFPADVLVTDETFFGAGFVSERTGIPVAWIATSIYVFSSRDTAPLGLGLPPSSSRLGRLRNTVLKQLTDRVVMRDLRRHADVVRDRVGLPRIRKGAFENIMRTPDLYLLGTVPSFEYPRGDMPPEVRFVGPFVSPAPPDFTPPAWWGELDSGRPVVHVTQGTVANDAERLLLPAIRALAAEDVLVVATTGAPLELEPMPANVRVERFIPHHALLPHVDAMVTNGGYGGVNTALAHGVPLVVAAATEEKHEVAARVSWSGAGVHLKKRRLSERDIRRAVRAVLDEPRFRVHAARLRDEYAARDAVVDAVDLIEGLV.

The protein belongs to the glycosyltransferase 28 family.

It catalyses the reaction 4'-demethylrebeccamycin + H2O = dichloroarcyriaflavin A + beta-D-glucose. The protein operates within alkaloid biosynthesis. Its function is as follows. Catalyzes the penultimate step in the biosynthesis of rebeccamycin, an indolocarbazole alkaloid that inhibits topoisomerase 1. Has a wide substrate range, including staurosporine aglycone, EJG-III-108A, J-104303, 6-N-methyl-arcyriaflavin and indolo-[2,3-a]-carbazole. The polypeptide is 4'-demethylrebeccamycin synthase (rebG) (Lentzea aerocolonigenes (Lechevalieria aerocolonigenes)).